Here is a 357-residue protein sequence, read N- to C-terminus: 3-isopropylmalate dehydrogenase (357 aa).

76 to 89 (GPQWDTIDPALRPE) contributes to the NAD(+) binding site. The substrate site is built by arginine 96, arginine 106, arginine 134, and aspartate 224. Residues aspartate 224, aspartate 248, and aspartate 252 each contribute to the Mg(2+) site. 282–294 (GSAPDIAGKGIAN) is an NAD(+) binding site.

Belongs to the isocitrate and isopropylmalate dehydrogenases family. LeuB type 1 subfamily. Homodimer. Requires Mg(2+) as cofactor. Mn(2+) serves as cofactor.

Its subcellular location is the cytoplasm. The catalysed reaction is (2R,3S)-3-isopropylmalate + NAD(+) = 4-methyl-2-oxopentanoate + CO2 + NADH. Its pathway is amino-acid biosynthesis; L-leucine biosynthesis; L-leucine from 3-methyl-2-oxobutanoate: step 3/4. In terms of biological role, catalyzes the oxidation of 3-carboxy-2-hydroxy-4-methylpentanoate (3-isopropylmalate) to 3-carboxy-4-methyl-2-oxopentanoate. The product decarboxylates to 4-methyl-2 oxopentanoate. The chain is 3-isopropylmalate dehydrogenase from Xanthomonas axonopodis pv. citri (strain 306).